The chain runs to 237 residues: Coat protein (237 aa).

The tract at residues 1–24 is disordered; sequence MSAPASTTQATGSTTSTTTKTAGA.

This sequence belongs to the potexvirus capsid protein family.

It localises to the virion. Required for genome encapsidation. Forms ribonucleoprotein complexes along with TGB1 helicase and viral RNA. The protein is Coat protein of Brassica campestris (Field mustard).